A 208-amino-acid polypeptide reads, in one-letter code: Protein THEM6 (208 aa).

A signal peptide spans 1 to 17 (MLGLLVALLALGLAVFA). Position 199 is a phosphoserine (serine 199).

It belongs to the THEM6 family.

The protein localises to the secreted. In Homo sapiens (Human), this protein is Protein THEM6 (THEM6).